The primary structure comprises 325 residues: Heat-inducible transcription repressor HrcA (325 aa).

It belongs to the HrcA family.

Functionally, negative regulator of class I heat shock genes (grpE-dnaK-dnaJ and groELS operons). Prevents heat-shock induction of these operons. This is Heat-inducible transcription repressor HrcA from Staphylococcus aureus (strain MRSA252).